Reading from the N-terminus, the 379-residue chain is Cytochrome b (379 aa).

4 consecutive transmembrane segments (helical) span residues 33–53 (FGSLLGMCLMIQILTGLFLAM), 77–98 (WLIRYLHANGASMFFICLFIHV), 113–133 (WNIGIILFFTTMATAFVGYVL), and 178–198 (FFAFHFILPFIITAFVLVHLL). Positions 83 and 97 each coordinate heme b. 2 residues coordinate heme b: histidine 182 and histidine 196. Histidine 201 is an a ubiquinone binding site. Helical transmembrane passes span 226–246 (IKDLLGILFLLMALMILALFF), 288–308 (LGGVLALLLSILILMAFPLLN), 320–340 (ITQIIYWILIANLLVLTWIGG), and 347–367 (FTMIGQIASITYFTIILILMP).

The protein belongs to the cytochrome b family. In terms of assembly, the cytochrome bc1 complex contains 11 subunits: 3 respiratory subunits (MT-CYB, CYC1 and UQCRFS1), 2 core proteins (UQCRC1 and UQCRC2) and 6 low-molecular weight proteins (UQCRH/QCR6, UQCRB/QCR7, UQCRQ/QCR8, UQCR10/QCR9, UQCR11/QCR10 and a cleavage product of UQCRFS1). This cytochrome bc1 complex then forms a dimer. The cofactor is heme b.

It is found in the mitochondrion inner membrane. Component of the ubiquinol-cytochrome c reductase complex (complex III or cytochrome b-c1 complex) that is part of the mitochondrial respiratory chain. The b-c1 complex mediates electron transfer from ubiquinol to cytochrome c. Contributes to the generation of a proton gradient across the mitochondrial membrane that is then used for ATP synthesis. This chain is Cytochrome b (MT-CYB), found in Akodon dayi (Day's grass mouse).